A 167-amino-acid chain; its full sequence is Transcription factor E (167 aa).

Residues 8-90 (NDKVIRGYLI…LWHLDFSDVE (83 aa)) form the HTH TFE/IIEalpha-type domain.

Belongs to the TFE family. As to quaternary structure, monomer. Interaction with RNA polymerase subunits RpoF and RpoE is necessary for Tfe stimulatory transcription activity. Able to interact with Tbp and RNA polymerase in the absence of DNA promoter. Interacts both with the preinitiation and elongation complexes.

Its function is as follows. Transcription factor that plays a role in the activation of archaeal genes transcribed by RNA polymerase. Facilitates transcription initiation by enhancing TATA-box recognition by TATA-box-binding protein (Tbp), and transcription factor B (Tfb) and RNA polymerase recruitment. Not absolutely required for transcription in vitro, but particularly important in cases where Tbp or Tfb function is not optimal. It dynamically alters the nucleic acid-binding properties of RNA polymerases by stabilizing the initiation complex and destabilizing elongation complexes. Seems to translocate with the RNA polymerase following initiation and acts by binding to the non template strand of the transcription bubble in elongation complexes. This chain is Transcription factor E, found in Methanosarcina acetivorans (strain ATCC 35395 / DSM 2834 / JCM 12185 / C2A).